The chain runs to 236 residues: Small ribosomal subunit protein uS2c (236 aa).

Belongs to the universal ribosomal protein uS2 family.

Its subcellular location is the plastid. The protein localises to the chloroplast. This Liriodendron tulipifera (Tuliptree) protein is Small ribosomal subunit protein uS2c (rps2).